We begin with the raw amino-acid sequence, 431 residues long: TDP-daunosamine transferase DnrS (431 aa).

A signal peptide spans 1–23; sequence MKVLVTAFAMDAHFNGVVPLAWA.

Belongs to the glycosyltransferase 28 family.

It carries out the reaction dTDP-beta-L-daunosamine + epsilon-rhodomycinone = rhodomycin D + dTDP + H(+). It functions in the pathway antibiotic biosynthesis; daunorubicin biosynthesis. Its pathway is antibiotic biosynthesis; carminomycin biosynthesis. Involved in the biosynthesis of the anthracyclines carminomycin and daunorubicin (daunomycin) which are aromatic polyketide antibiotics that exhibit high cytotoxicity and are widely applied in the chemotherapy of a variety of cancers. Catalyzes the addition of the TDP activated glycoside, L-daunosamine-TDP (2,3,6-trideoxy-3-aminohexose-TDP) at position C-7 of epsilon-rhodomycinone to yield rhodomycin D. Glycosylation is a prerequisite for biological activity of anthracyclines and requires DnrQ which seems to act as an activator. In Streptomyces peucetius, this protein is TDP-daunosamine transferase DnrS (dnrS).